A 242-amino-acid polypeptide reads, in one-letter code: MIIPALDVLQNQIVRLYQGKYETVQFYPFELGARLKEYADSGAGKLHLVDLEGARDPSKKQWQHIQAATKALNVPYQVGGGIRCEQDVSDWLKAGANQVVIGSMAVEKREQVKAWIEQFGAEHFVIALDVNKTATGWAPATHGWLTESEFGLLELVDFYANLGVIDFLCTDISKDGTMTGPSFALYEDLIKHNSTIKVQASGGVSSLDDIKKLKELGIGGIILGKSLLDGAFSVEEALAVTR.

D7 acts as the Proton acceptor in catalysis. Residue D129 is the Proton donor of the active site.

This sequence belongs to the HisA/HisF family.

The protein localises to the cytoplasm. The catalysed reaction is 1-(5-phospho-beta-D-ribosyl)-5-[(5-phospho-beta-D-ribosylamino)methylideneamino]imidazole-4-carboxamide = 5-[(5-phospho-1-deoxy-D-ribulos-1-ylimino)methylamino]-1-(5-phospho-beta-D-ribosyl)imidazole-4-carboxamide. Its pathway is amino-acid biosynthesis; L-histidine biosynthesis; L-histidine from 5-phospho-alpha-D-ribose 1-diphosphate: step 4/9. In Pseudoalteromonas translucida (strain TAC 125), this protein is 1-(5-phosphoribosyl)-5-[(5-phosphoribosylamino)methylideneamino] imidazole-4-carboxamide isomerase.